The following is a 104-amino-acid chain: Co-chaperonin GroES 2 (104 aa).

This sequence belongs to the GroES chaperonin family. As to quaternary structure, heptamer of 7 subunits arranged in a ring. Interacts with the chaperonin GroEL.

Its subcellular location is the cytoplasm. Functionally, together with the chaperonin GroEL, plays an essential role in assisting protein folding. The GroEL-GroES system forms a nano-cage that allows encapsulation of the non-native substrate proteins and provides a physical environment optimized to promote and accelerate protein folding. GroES binds to the apical surface of the GroEL ring, thereby capping the opening of the GroEL channel. The sequence is that of Co-chaperonin GroES 2 from Bradyrhizobium diazoefficiens (strain JCM 10833 / BCRC 13528 / IAM 13628 / NBRC 14792 / USDA 110).